Here is a 968-residue protein sequence, read N- to C-terminus: Probable histidine kinase 1 (968 aa).

Coiled coils occupy residues 89-120 (LLKEQIGLLCQQRKEIEQRKQQILEEQQFQDE) and 169-204 (KERAMQLEKTLEASLQRERSLEEKLEENIKNLQSHT). The Histidine kinase domain maps to 372–655 (TMSHEIRSPL…TFSFVLPCKI (284 aa)). His375 is subject to Phosphohistidine; by autocatalysis. The segment at 737–757 (STNSASTAHQSNGPSVSRTNK) is disordered. The span at 738–754 (TNSASTAHQSNGPSVSR) shows a compositional bias: polar residues. The Response regulatory domain occupies 818 to 965 (KILLVEDNKV…NIKECLQQYL (148 aa)). Asp867 is modified (4-aspartylphosphate).

In terms of processing, activation probably requires a transfer of a phosphate group between a His in the transmitter domain and an Asp of the receiver domain.

The catalysed reaction is ATP + protein L-histidine = ADP + protein N-phospho-L-histidine.. Its function is as follows. Cytokinin receptor related to bacterial two-component regulators. Functions as a histidine kinase and transmits the stress signal to a downstream MAPK cascade. The protein is Probable histidine kinase 1 of Oryza sativa subsp. indica (Rice).